A 105-amino-acid chain; its full sequence is UPF0145 protein VP1283 (105 aa).

This sequence belongs to the UPF0145 family.

This chain is UPF0145 protein VP1283, found in Vibrio parahaemolyticus serotype O3:K6 (strain RIMD 2210633).